Reading from the N-terminus, the 1166-residue chain is Poly [ADP-ribose] polymerase tankyrase-2 (1166 aa).

3 ANK repeats span residues 57 to 89, 90 to 122, and 123 to 155; these read RKSTPLHFAAGFGRKDVVEYLLQNGANVQARDD, GGLIPLHNACSFGHAEVVNLLLRHGADPNARDN, and WNYTPLHEAAIKGKIDVCIVLLQHGAEPTIRNT. At Asn203 the chain carries (3S)-3-hydroxyasparagine; by HIF1AN; partial. 6 ANK repeats span residues 210-242, 243-275, 276-308, 363-398, 399-431, and 432-464; these read RKSTPLHLAAGYNRVKIVQLLLQHGADVHAKDK, GDLVPLHNACSYGHYEVTELLVKHGACVNAMDL, WQFTPLHEAASKNRVEVCSLLLSYGADPTLLNC, THETALHCAAASPYPKRKQICELLLRKGANINEKTK, EFLTPLHVASEKAHNDVVEVVVKHEAKVNALDN, and LGQTSLHRAAYCGHLQTCRLLLSYGCDPNIISL. His238 is modified ((3S)-3-hydroxyhistidine; by HIF1AN; partial). Asn271 bears the (3S)-3-hydroxyasparagine; by HIF1AN; partial mark. (3S)-3-hydroxyasparagine; by HIF1AN; partial is present on Asn427. Residue Asn518 is modified to (3S)-3-hydroxyasparagine; by HIF1AN; partial. 3 ANK repeats span residues 525 to 557, 558 to 590, and 591 to 623; these read RQSTPLHFAAGYNRVSVVEYLLQHGADVHAKDK, GGLVPLHNACSYGHYEVAELLVKHGAVVNVADL, and WKFTPLHEAAAKGKYEICKLLLQHGADPTKKNR. The interval 545 to 553 is HIF1AN-binding; sequence LLQHGADVH. His553 is subject to (3S)-3-hydroxyhistidine; by HIF1AN; partial. Asn586 is subject to (3S)-3-hydroxyasparagine; by HIF1AN; partial. 3 positions are modified to (3S)-3-hydroxyasparagine; by HIF1AN; partial: Asn671, Asn706, and Asn739. ANK repeat units lie at residues 678–710, 711–743, and 744–776; these read RHSTPLHLAAGYNNLEVAEYLLQHGADVNAQDK, GGLIPLHNAASYGHVDVAALLIKYNACVNATDK, and WAFTPLHEAAQKGRTQLCALLLAHGADPTLKNQ. The interval 819 to 839 is disordered; the sequence is GATADALSSGPSSPSSLSAAS. Residues 822–839 are compositionally biased toward low complexity; it reads ADALSSGPSSPSSLSAAS. In terms of domain architecture, SAM spans 873-936; that stretch reads GVDFSITQFV…IKGVERLISG (64 aa). A PARP catalytic domain is found at 959-1164; it reads SPDDKEFQSV…YQIMRPEGMV (206 aa). 4 residues coordinate Zn(2+): Cys1081, His1084, Cys1089, and Cys1092.

The protein belongs to the ARTD/PARP family. In terms of assembly, oligomerizes and associates with TNKS. Interacts with the cytoplasmic domain of LNPEP/Otase in SLC2A4/GLUT4-vesicles. Binds to the N-terminus of Grb14 and TRF1 with its ankyrin repeat region. Interacts with HIF1AN. Interacts with RNF146; this interaction leads to ubiquitination and proteasomal degradation. Interacts with NUMA1. Post-translationally, ubiquitinated at 'Lys-48' and 'Lys-63' by RNF146 when auto-poly-ADP-ribosylated; this leads to degradation. Deubiquitinated by USP25; leading to stabilization. ADP-ribosylated (-auto). Poly-ADP-ribosylated protein is recognized by RNF146, followed by ubiquitination. In terms of processing, the crystallographic evidence suggests that the 3-hydroxyhistidine may be the (3S) stereoisomer. Highly expressed in placenta, skeletal muscle, liver, brain, kidney, heart, thymus, spinal cord, lung, peripheral blood leukocytes, pancreas, lymph nodes, spleen, prostate, testis, ovary, small intestine, colon, mammary gland, breast and breast carcinoma, and in common-type meningioma. Highly expressed in fetal liver, heart and brain.

It localises to the cytoplasm. It is found in the golgi apparatus membrane. The protein localises to the nucleus. The protein resides in the chromosome. Its subcellular location is the telomere. It carries out the reaction NAD(+) + (ADP-D-ribosyl)n-acceptor = nicotinamide + (ADP-D-ribosyl)n+1-acceptor + H(+).. It catalyses the reaction L-aspartyl-[protein] + NAD(+) = 4-O-(ADP-D-ribosyl)-L-aspartyl-[protein] + nicotinamide. The catalysed reaction is L-glutamyl-[protein] + NAD(+) = 5-O-(ADP-D-ribosyl)-L-glutamyl-[protein] + nicotinamide. Specifically inhibited by XAV939, a small molecule, leading to inhibit the Wnt signaling pathway by stabilizing AXIN1 and AXIN2. Inhibited by talazoparib. Poly-ADP-ribosyltransferase involved in various processes such as Wnt signaling pathway, telomere length and vesicle trafficking. Acts as an activator of the Wnt signaling pathway by mediating poly-ADP-ribosylation of AXIN1 and AXIN2, 2 key components of the beta-catenin destruction complex: poly-ADP-ribosylated target proteins are recognized by RNF146, which mediates their ubiquitination and subsequent degradation. Also mediates poly-ADP-ribosylation of BLZF1 and CASC3, followed by recruitment of RNF146 and subsequent ubiquitination. Mediates poly-ADP-ribosylation of TERF1, thereby contributing to the regulation of telomere length. Stimulates 26S proteasome activity. This Homo sapiens (Human) protein is Poly [ADP-ribose] polymerase tankyrase-2.